Here is a 167-residue protein sequence, read N- to C-terminus: SsrA-binding protein (167 aa).

The span at 139-158 shows a compositional bias: basic and acidic residues; that stretch reads QNHDKRDAAKDRDWQRDKQR. Residues 139–167 form a disordered region; it reads QNHDKRDAAKDRDWQRDKQRVMRRHNRDA.

It belongs to the SmpB family.

It localises to the cytoplasm. Its function is as follows. Required for rescue of stalled ribosomes mediated by trans-translation. Binds to transfer-messenger RNA (tmRNA), required for stable association of tmRNA with ribosomes. tmRNA and SmpB together mimic tRNA shape, replacing the anticodon stem-loop with SmpB. tmRNA is encoded by the ssrA gene; the 2 termini fold to resemble tRNA(Ala) and it encodes a 'tag peptide', a short internal open reading frame. During trans-translation Ala-aminoacylated tmRNA acts like a tRNA, entering the A-site of stalled ribosomes, displacing the stalled mRNA. The ribosome then switches to translate the ORF on the tmRNA; the nascent peptide is terminated with the 'tag peptide' encoded by the tmRNA and targeted for degradation. The ribosome is freed to recommence translation, which seems to be the essential function of trans-translation. In Xanthomonas euvesicatoria pv. vesicatoria (strain 85-10) (Xanthomonas campestris pv. vesicatoria), this protein is SsrA-binding protein.